The chain runs to 210 residues: N-(5'-phosphoribosyl)anthranilate isomerase (210 aa).

This sequence belongs to the TrpF family.

The catalysed reaction is N-(5-phospho-beta-D-ribosyl)anthranilate = 1-(2-carboxyphenylamino)-1-deoxy-D-ribulose 5-phosphate. The protein operates within amino-acid biosynthesis; L-tryptophan biosynthesis; L-tryptophan from chorismate: step 3/5. The polypeptide is N-(5'-phosphoribosyl)anthranilate isomerase (Magnetococcus marinus (strain ATCC BAA-1437 / JCM 17883 / MC-1)).